Consider the following 58-residue polypeptide: Small ribosomal subunit protein bS21 (58 aa).

Residues 25–58 form a disordered region; that stretch reads SKSGTLQEYRKREHYEKPSVKRKKKSEAARKRKF. Basic and acidic residues predominate over residues 32–43; it reads EYRKREHYEKPS. The span at 44–58 shows a compositional bias: basic residues; sequence VKRKKKSEAARKRKF.

It belongs to the bacterial ribosomal protein bS21 family.

The polypeptide is Small ribosomal subunit protein bS21 (Oceanobacillus iheyensis (strain DSM 14371 / CIP 107618 / JCM 11309 / KCTC 3954 / HTE831)).